The chain runs to 82 residues: Mu-conotoxin MrVIA (82 aa).

The N-terminal stretch at 1 to 22 (MKLTCMMIVAVLFLTAWTLVMA) is a signal peptide. A propeptide spanning residues 23-49 (DDSNNGLANHFSKSRDEMEDPEASKLE) is cleaved from the precursor. Intrachain disulfides connect C53–C71, C60–C76, and C70–C81.

Expressed by the venom duct.

Its subcellular location is the secreted. In terms of biological role, muO-conotoxins are gating-modifier toxins that inhibit sodium current by trapping the domain II voltage sensor in the closed position to prevent opening of the sodium channel. This toxin inhibits rNav1.2/SCN2A (IC(50)=532 nM), rNav1.4/SCN4A (IC(50)=438 nM) and rNav1.7/SCN9A (IC(50)=345 nM). It blocks Nav channels by interacting mainly with the C-terminal part of the pore loop of domain-3. It does not bind on site 1. At small concentration, this toxin also acts as a calcium current agonist, whereas at higher doses it blocks fast-inactivating calcium current. The chain is Mu-conotoxin MrVIA from Conus marmoreus (Marble cone).